A 320-amino-acid polypeptide reads, in one-letter code: uncharacterized protein (320 aa).

The FHA domain maps to 22–86 (KTIGRSSSFD…IRDLNNKTGT (65 aa)). Positions 242 to 264 (TDTDTTEEKEEEEEKEEGDDEEG) are disordered.

This is an uncharacterized protein from Saccharomyces cerevisiae (strain ATCC 204508 / S288c) (Baker's yeast).